We begin with the raw amino-acid sequence, 597 residues long: Indole-3-acetic acid-amido synthetase GH3.4 (597 aa).

It belongs to the IAA-amido conjugating enzyme family.

In terms of biological role, catalyzes the synthesis of indole-3-acetic acid (IAA)-amino acid conjugates, providing a mechanism for the plant to cope with the presence of excess auxin. Strongly reactive with Glu, Gln, Trp, Asp, Ala, Leu, Phe, Gly, Tyr, Met, Ile and Val. Little or no product formation with His, Ser, Thr, Arg, Lys, or Cys. Also active on pyruvic and butyric acid analogs of IAA, PAA and the synthetic auxin naphthaleneacetic acid (NAA). The two chlorinated synthetic auxin herbicides 2,4-D and 3,6-dichloro-o-anisic acid (dicamba) cannot be used as substrates. The sequence is that of Indole-3-acetic acid-amido synthetase GH3.4 (GH3.4) from Arabidopsis thaliana (Mouse-ear cress).